Reading from the N-terminus, the 506-residue chain is Conglutin alpha 1 (506 aa).

Positions 1-19 are cleaved as a signal peptide; it reads MANKLLALSLFLLFSGCFA. Disulfide bonds link cysteine 31/cysteine 64 and cysteine 107/cysteine 328. Residues 36 to 235 form the Cupin type-1 1 domain; that stretch reads LNALEPDNSV…AFSVDREIVR (200 aa). Disordered regions lie at residues 111-131, 195-216, and 251-322; these read YEEP…RHQK, QQKE…NVLS, and VKEG…DRNG. Residues 195 to 207 show a composition bias toward low complexity; it reads QQKEGGQGQQQEG. The segment covering 270-280 has biased composition (acidic residues); sequence EEEEEEEEEEE. Basic residues predominate over residues 306 to 315; that stretch reads QVRRVRRPHH. Residues 334 to 483 enclose the Cupin type-1 2 domain; that stretch reads HNIGQSTSPD…AFNLDRDQAR (150 aa). Asparagine 397 and asparagine 439 each carry an N-linked (GlcNAc...) asparagine glycan.

Belongs to the 11S seed storage protein (globulins) family. In terms of assembly, hexamer; each subunit is composed of an acidic and a basic chain derived from a single precursor and linked by a disulfide bond. Component of globulins complexes which accumulate in seeds. Expressed in developing cotyledons and in the embryonic axis of germinating seeds.

Sulfur-rich seed storage protein. This protein found in the seeds of many leguminous and non-leguminous plants is the source of sulfur-containing amino acids in seed meals. In Lupinus angustifolius (Narrow-leaved blue lupine), this protein is Conglutin alpha 1.